Here is a 382-residue protein sequence, read N- to C-terminus: F-box/kelch-repeat protein At3g16580 (382 aa).

Positions 9 to 55 (WEFSLSLPWELIEEILSRVPPESLLRFKTVSKQWNALFRDKTFINNH) constitute an F-box domain. Kelch repeat units lie at residues 150–196 (KIFA…NIYT) and 334–381 (WIYV…AELQ).

This is F-box/kelch-repeat protein At3g16580 from Arabidopsis thaliana (Mouse-ear cress).